Reading from the N-terminus, the 818-residue chain is Exchange factor for Arf-6 (818 aa).

4 disordered regions span residues 92–123, 137–168, 208–291, and 326–383; these read AQKL…ESSP, MEST…ENDD, NHHH…GVSN, and RTTP…VGGE. The span at 107-119 shows a compositional bias: basic and acidic residues; sequence IERRGSLARKTSE. Positions 140-149 are enriched in acidic residues; the sequence is TDVEESEEET. Positions 154–165 are enriched in basic and acidic residues; the sequence is TDEKENQKKPNE. 2 stretches are compositionally biased toward polar residues: residues 213–223 and 255–269; these read YNSSPQISTLS and MSNN…SPEN. Low complexity predominate over residues 326–347; that stretch reads RTTPNTAASNSSASASPSLHAT. In terms of domain architecture, SEC7 spans 356–532; it reads GVSLRSAESS…KTLFQSIKDN (177 aa). Positions 361–380 are enriched in polar residues; it reads SAESSNLNQTAVPSTSTNSV. The PH domain occupies 569 to 681; sequence VEYYSGFLMR…WCEKINFVAA (113 aa). Over residues 782–799 the composition is skewed to polar residues; sequence TMNIMMTPTRRQQQNQKP. The interval 782-818 is disordered; the sequence is TMNIMMTPTRRQQQNQKPVVSEDRLSYTDAVNGAAAH.

As to quaternary structure, interacts (via short N-terminal region) with microtubule-associated proteins tac-1 and zyg-8.

Its subcellular location is the cytoplasm. It is found in the cell cortex. The protein resides in the cell membrane. Its function is as follows. Guanine nucleotide exchange factor for arf-6. Involved in response to injury in mechanosensory neurons. Inhibits axon regrowth via microtubule dynamics, possibly by inducing axonal microtubule catastrophes. Limits microtubule growth near the cellular cortex of early embryonic cells. The polypeptide is Exchange factor for Arf-6 (Caenorhabditis elegans).